A 90-amino-acid chain; its full sequence is Putative cytochrome c oxidase subunit 5b-like (90 aa).

Zn(2+) contacts are provided by cysteine 43, cysteine 67, and cysteine 70.

It belongs to the cytochrome c oxidase subunit 5B (TC 3.D.4.11) family.

In Arabidopsis thaliana (Mouse-ear cress), this protein is Putative cytochrome c oxidase subunit 5b-like.